Reading from the N-terminus, the 510-residue chain is MSFWLPSQGKLYLPPPTAVTQYLDTDDFVTRTDTFYHTNTERLLFVGHPYFDIKREDKVLVPKVSGSQFRVFRLKFPDPNKFSFPDPNVYNSDNQRLVWALRGIEICRGQPLGIGVTGHPSFNKFKDAENNNNKTPDQTTDDRVNMAVDPKQVQMFIVGCTPCDGEHWDVAQACDRLEPGACPPIELKNTIIEDGEMCDTGFGNMNFQKLQASKSGAPLDIVNQIVKYPDFLKMGSDPHGNSMFFYAKREQMYVRHLWSRGGTIGEEIPPNGEASPYYLPGAGRATLPTSVYFGSPSGSLVSSDQQIYNRPFWIQRAQGRNNGICWNNQLFVTAVDSTRGTNFTISVHRDKPSLEDQDTYTAAEFKHYLRHVEEWEVSLVLQLCIVDLTPEALAHINGMDPRIIESWNLGFIHAPNNIEDQYRYLQSIATRCPPKEDAAATEDPYAKYTFWDVDLTERFSMNLDQYSLGRKFLFQIGKKSRGIKRSAPKAVTFESSSRSKKAPKRRRKNV.

The interval 482-510 (GIKRSAPKAVTFESSSRSKKAPKRRRKNV) is disordered. Residues 498–510 (RSKKAPKRRRKNV) are compositionally biased toward basic residues.

The protein belongs to the papillomaviridae L1 protein family. As to quaternary structure, self-assembles into homopentamers. The capsid has an icosahedral symmetry and consists of 72 capsomers, with each capsomer being a pentamer of L1. Interacts with the minor capsid protein L2; this interaction is necessary for viral genome encapsidation. Interacts with protein E2; this interaction enhances E2-dependent replication and transcription activation.

It is found in the virion. It localises to the host nucleus. In terms of biological role, forms an icosahedral capsid with a T=7 symmetry and a 50 nm diameter. The capsid is composed of 72 pentamers linked to each other by disulfide bonds and associated with L2 proteins. Binds to heparan sulfate proteoglycans on cell surface of basal layer keratinocytes to provide initial virion attachment. This binding mediates a conformational change in the virus capsid that facilitates efficient infection. The virion enters the host cell via endocytosis. During virus trafficking, L1 protein dissociates from the viral DNA and the genomic DNA is released to the host nucleus. The virion assembly takes place within the cell nucleus. Encapsulates the genomic DNA together with protein L2. This is Major capsid protein L1 from Bos taurus (Bovine).